A 339-amino-acid chain; its full sequence is Cathepsin B (339 aa).

Positions 1 to 17 (MWQLWASLCCLLVLANA) are cleaved as a signal peptide. Residues 18-79 (RSRPSFHPLS…QRVMFTEDLK (62 aa)) constitute a propeptide, activation peptide. Cystine bridges form between cysteine 93-cysteine 122, cysteine 105-cysteine 150, cysteine 141-cysteine 207, cysteine 142-cysteine 146, cysteine 179-cysteine 211, and cysteine 187-cysteine 198. Cysteine 108 is an active-site residue. Asparagine 192 carries an N-linked (GlcNAc...) asparagine glycan. Lysine 220 carries the post-translational modification N6-acetyllysine. Catalysis depends on residues histidine 278 and asparagine 298. The propeptide occupies 334–339 (QYWEKI).

Belongs to the peptidase C1 family. In terms of assembly, dimer of a heavy chain and a light chain cross-linked by a disulfide bond. Interacts with SRPX2. Directly interacts with SHKBP1. Expressed in the stratum spinosum of the epidermis. Weak expression is detected in the stratum granulosum.

The protein localises to the lysosome. Its subcellular location is the melanosome. The protein resides in the secreted. It is found in the extracellular space. It localises to the apical cell membrane. The enzyme catalyses Hydrolysis of proteins with broad specificity for peptide bonds. Preferentially cleaves -Arg-Arg-|-Xaa bonds in small molecule substrates (thus differing from cathepsin L). In addition to being an endopeptidase, shows peptidyl-dipeptidase activity, liberating C-terminal dipeptides.. With respect to regulation, inhibited by leupeptin. In terms of biological role, thiol protease which is believed to participate in intracellular degradation and turnover of proteins. Cleaves matrix extracellular phosphoglycoprotein MEPE. Involved in the solubilization of cross-linked TG/thyroglobulin in the thyroid follicle lumen. Has also been implicated in tumor invasion and metastasis. The sequence is that of Cathepsin B (CTSB) from Homo sapiens (Human).